The following is a 396-amino-acid chain: MKTLLLLLLVLLELGEAQGSLHRVPLRRHPSLKKKLRARSQLSEFWKSHNLDMIQFTESCSMDQSAKEPLINYLDMEYFGTISIGSPPQNFTVIFDTGSSNLWVPSVYCTSPACKTHSRFQPSQSSTYSQPGQSFSIQYGTGSLSGIIGADQVSVEGLTVVGQQFGESVTEPGQTFVDAEFDGILGLGYPSLAVGGVTPVFDNMMAQNLVDLPMFSVYMSSNPEGGAGSELIFGGYDHSHFSGSLNWVPVTKQAYWQIALDNIQVGGTVMFCSEGCQAIVDTGTSLITGPSDKIKQLQNAIGAAPVDGEYAVECANLNVMPDVTFTINGVPYTLSPTAYTLLDFVDGMQFCSSGFQGLDIHPPAGPLWILGDVFIRQFYSVFDRGNNRVGLAPAVP.

The first 19 residues, 1 to 19, serve as a signal peptide directing secretion; it reads MKTLLLLLLVLLELGEAQG. Positions 20-53 are cleaved as a propeptide — activation peptide; that stretch reads SLHRVPLRRHPSLKKKLRARSQLSEFWKSHNLDM. Positions 78-396 constitute a Peptidase A1 domain; sequence YFGTISIGSP…NRVGLAPAVP (319 aa). An N-linked (GlcNAc...) asparagine glycan is attached at N90. D96 is a catalytic residue. 2 disulfide bridges follow: C109–C114 and C272–C276. Residue D281 is part of the active site. Residues C314 and C351 are joined by a disulfide bond.

This sequence belongs to the peptidase A1 family. Homodimer; disulfide-linked. Glycosylated. The nature of the carbohydrate chain varies between cell types. In fibroblasts, the proenzyme contains a high mannose-type oligosaccharide, while the mature enzyme contains a complex-type oligosaccharide. In erythrocyte membranes, both the proenzyme and mature enzyme contain a complex-type oligosaccharide. In terms of processing, two forms are produced by autocatalytic cleavage, form I begins at Ile-54, form II begins at Thr-57. As to expression, expressed abundantly in the stomach, the Clara cells of the lung and activated B-lymphocytes, and at lower levels in lymph nodes, skin and spleen. Not expressed in resting B-lymphocytes.

It localises to the endosome. It carries out the reaction Similar to cathepsin D, but slightly broader specificity.. In terms of biological role, may have a role in immune function. Probably involved in the processing of antigenic peptides during MHC class II-mediated antigen presentation. May play a role in activation-induced lymphocyte depletion in the thymus, and in neuronal degeneration and glial cell activation in the brain. This is Cathepsin E (CTSE) from Homo sapiens (Human).